Here is a 120-residue protein sequence, read N- to C-terminus: UPF0102 protein TWT_455 (120 aa).

It belongs to the UPF0102 family.

This Tropheryma whipplei (strain Twist) (Whipple's bacillus) protein is UPF0102 protein TWT_455.